Consider the following 292-residue polypeptide: uncharacterized protein (292 aa).

Catalysis depends on charge relay system residues Thr43 and Tyr105. Tyr131 serves as the catalytic Proton donor. Residue Lys159 is the Schiff-base intermediate with substrate of the active site.

It belongs to the DapA family. Homotetramer.

It is found in the cytoplasm. This is an uncharacterized protein from Thermococcus kodakarensis (strain ATCC BAA-918 / JCM 12380 / KOD1) (Pyrococcus kodakaraensis (strain KOD1)).